The chain runs to 961 residues: MLSGERKEGGSPRFGKLHLPVGLWINSPRKQLAKLGRRWPSAASVKSSSSDTGSRSSEPLPPPPPPPHVELRRVGAVKAAGGASGSRAKRISQLFRGSGAGGAGGPGTPGGAQRWASEKKLPELAAGVAPEPPLPTRAAVPPGVLKIFASGLASGANYKSVLATERSTARELVAEALERYGLTGGRGAGDSGCVDAYALCDALGRPAVGVGGGEWRAEHLRVLADAERPLLVQDLWRARPGWARRFELRGREEARRLEQEAFGAADADGTNAPSWRTQKNRSRAASGGAALASPGPGSGSGTPTGSGGKERSENLSLRRSVSELSLQGRRRRQQERRQQALSMAPGAADAQMVPTDPGDFDQLTQCLIQAPSNRPYFLLLQGYQDAQDFVVYVMTREQHVFGRGGPSSSRGGSPAPYVDTFLNAPDILPRHCTVRAGPEPPAMVRPSRGAPVTHNGCLLLREAELHPGDLLGLGEHFLFMYKDPRSGGSGPARPSWLPARPGAAPPGPGWAFSCRLCGRGLQERGEALAAYLDGREPVLRFRPREEEALLGEIVRAAASGAGDLPPLGPATLLALCVQHSARELELGHLPRLLGRLARLIKEAVWEKIKEIGDRQPENHPEGVPEVPLTPEAVSVELRPLILWMANTTELLSFVQEKVLEMEKEADQEGLSSDPQLCNDLELCDEALALLDEVIMCTFQQSVYYLTKTLYSTLPALLDSNPFTAGAELPGPGAELEAMPPGLRPTLGVFQAALELTSQCELHPDLVSQTFGYLFFFSNASLLNSLMERGQGRPFYQWSRAVQIRTNLDLVLDWLQGAGLGDIATEFFRKLSIAVNLLCVPRTSLLKASWSSLRTDYPTLTPAQLHHLLSHYQLGPGRGPPPAWDPPPAERDAVDTGDIFESFSSHPPLILPLGSSRLRLTGPVTDDALHRELRRLRRLLWDLEQQELPANHRHGPPVASTP.

Residues M1–G10 are compositionally biased toward basic and acidic residues. Disordered stretches follow at residues M1–V21, L35–E70, and R96–A116. Residues S41–S57 show a composition bias toward low complexity. The span at P59–H68 shows a compositional bias: pro residues. Residue R96 is modified to Omega-N-methylarginine. The span at S98–G110 shows a compositional bias: gly residues. The Ras-associating domain occupies P141 to E253. A disordered region spans residues A261–M352. Residues S274 and S286 each carry the phosphoserine modification. Residues A284–G295 show a composition bias toward low complexity. Positions P296–G307 are enriched in gly residues. The span at N314–Q327 shows a compositional bias: low complexity. S320, S322, S325, and S413 each carry phosphoserine. The region spanning G594 to T895 is the Dilute domain.

Interacts with Ras family members that have been activated by GTP binding. Interacts with HRAS, RAP1A, RAP2, RRAS, RAF1 and RRAS2. Interacts with MYH9 and ARHGAP29. Detected in kidney, heart, skeletal muscle, small intestine and lung.

It is found in the cytoplasm. The protein localises to the perinuclear region. Its subcellular location is the golgi apparatus. It localises to the golgi stack. Functionally, required for the proper formation of vascular structures that develop via both vasculogenesis and angiogenesis. Acts as a critical and vascular-specific regulator of GTPase signaling, cell architecture, and adhesion, which is essential for endothelial cell morphogenesis and blood vessel tubulogenesis. Regulates the activity of Rho GTPases in part by recruiting ARHGAP29 and suppressing RhoA signaling and dampening ROCK and MYH9 activities in endothelial cells. May act as effector for Golgi-bound HRAS and other Ras-like proteins. May promote HRAS-mediated transformation. Negative regulator of amino acid starvation-induced autophagy. This chain is Ras-interacting protein 1 (Rasip1), found in Mus musculus (Mouse).